The chain runs to 715 residues: Putative pentatricopeptide repeat-containing protein At3g23330 (715 aa).

PPR repeat units lie at residues 38 to 68 (SHTSASIVISIYTNLKLLHEALLLFKTLKSP), 69 to 103 (PVLAWKSVIRCFTDQSLFSKALASFVEMRASGRCP), 104 to 138 (DHNVFPSVLKSCTMMMDLRFGESVHGFIVRLGMDC), 139 to 172 (DLYTGNALMNMYAKLLGMGSKISVGNVFDEMPQR), 206 to 240 (DVVSYNTIIAGYAQSGMYEDALRMVREMGTTDLKP), 241 to 275 (DSFTLSSVLPIFSEYVDVIKGKEIHGYVIRKGIDS), 276 to 306 (DVYIGSSLVDMYAKSARIEDSERVFSRLYCR), 307 to 341 (DGISWNSLVAGYVQNGRYNEALRLFRQMVTAKVKP), 342 to 376 (GAVAFSSVIPACAHLATLHLGKQLHGYVLRGGFGS), 377 to 407 (NIFIASALVDMYSKCGNIKAARKIFDRMNVL), 408 to 442 (DEVSWTAIIMGHALHGHGHEAVSLFEEMKRQGVKP), 443 to 473 (NQVAFVAVLTACSHVGLVDEAWGYFNSMTKV), and 479 to 509 (ELEHYAAVADLLGRAGKLEEAYNFISKMCVE). A type E motif region spans residues 514–589 (VWSTLLSSCS…KPACSWIEMK (76 aa)). Residues 590–620 (NKTHGFVSGDRSHPSMDKINEFLKAVMEQME) are type E(+) motif. Residues 621–715 (KEGYVADTSG…RGNCSCGDYW (95 aa)) form a type DYW motif region.

It belongs to the PPR family. PCMP-H subfamily.

The polypeptide is Putative pentatricopeptide repeat-containing protein At3g23330 (PCMP-H32) (Arabidopsis thaliana (Mouse-ear cress)).